The chain runs to 489 residues: Aspartyl/glutamyl-tRNA(Asn/Gln) amidotransferase subunit B (489 aa).

This sequence belongs to the GatB/GatE family. GatB subfamily. In terms of assembly, heterotrimer of A, B and C subunits.

The catalysed reaction is L-glutamyl-tRNA(Gln) + L-glutamine + ATP + H2O = L-glutaminyl-tRNA(Gln) + L-glutamate + ADP + phosphate + H(+). The enzyme catalyses L-aspartyl-tRNA(Asn) + L-glutamine + ATP + H2O = L-asparaginyl-tRNA(Asn) + L-glutamate + ADP + phosphate + 2 H(+). Allows the formation of correctly charged Asn-tRNA(Asn) or Gln-tRNA(Gln) through the transamidation of misacylated Asp-tRNA(Asn) or Glu-tRNA(Gln) in organisms which lack either or both of asparaginyl-tRNA or glutaminyl-tRNA synthetases. The reaction takes place in the presence of glutamine and ATP through an activated phospho-Asp-tRNA(Asn) or phospho-Glu-tRNA(Gln). This chain is Aspartyl/glutamyl-tRNA(Asn/Gln) amidotransferase subunit B, found in Polynucleobacter asymbioticus (strain DSM 18221 / CIP 109841 / QLW-P1DMWA-1) (Polynucleobacter necessarius subsp. asymbioticus).